Consider the following 354-residue polypeptide: 3-isopropylmalate dehydrogenase (354 aa).

76-87 (GPRWDGAKERPE) is a binding site for NAD(+). Arginine 94, arginine 104, arginine 130, and aspartate 215 together coordinate substrate. Mg(2+)-binding residues include aspartate 215, aspartate 239, and aspartate 243. 273 to 285 (GSAPDIAGKNKAN) is an NAD(+) binding site.

This sequence belongs to the isocitrate and isopropylmalate dehydrogenases family. LeuB type 1 subfamily. Homodimer. Mg(2+) is required as a cofactor. The cofactor is Mn(2+).

The protein localises to the cytoplasm. It catalyses the reaction (2R,3S)-3-isopropylmalate + NAD(+) = 4-methyl-2-oxopentanoate + CO2 + NADH. It participates in amino-acid biosynthesis; L-leucine biosynthesis; L-leucine from 3-methyl-2-oxobutanoate: step 3/4. Functionally, catalyzes the oxidation of 3-carboxy-2-hydroxy-4-methylpentanoate (3-isopropylmalate) to 3-carboxy-4-methyl-2-oxopentanoate. The product decarboxylates to 4-methyl-2 oxopentanoate. This is 3-isopropylmalate dehydrogenase from Bacillus thuringiensis subsp. konkukian (strain 97-27).